Consider the following 172-residue polypeptide: Type IV secretion system putative outer membrane lipoprotein BRA0058/BS1330_II0058 (172 aa).

Positions 1–15 (MRTLVMVACAVSLAA) are cleaved as a signal peptide. Cys-16 is lipidated: N-palmitoyl cysteine. Cys-16 carries S-diacylglycerol cysteine lipidation. The OmpA-like domain maps to 58-172 (WPARPPKQTV…RRVDIEILRK (115 aa)).

It is found in the cell outer membrane. In terms of biological role, the VirB system could be required for the establishment of the replication niche in the host. The chain is Type IV secretion system putative outer membrane lipoprotein BRA0058/BS1330_II0058 from Brucella suis biovar 1 (strain 1330).